Consider the following 137-residue polypeptide: Large ribosomal subunit protein uL16 (137 aa).

The segment covering 1 to 13 (MLQPKRRKYRKEQ) has biased composition (basic residues). The tract at residues 1–22 (MLQPKRRKYRKEQKGRNTGVAT) is disordered.

It belongs to the universal ribosomal protein uL16 family. In terms of assembly, part of the 50S ribosomal subunit.

Its function is as follows. Binds 23S rRNA and is also seen to make contacts with the A and possibly P site tRNAs. This chain is Large ribosomal subunit protein uL16, found in Polynucleobacter asymbioticus (strain DSM 18221 / CIP 109841 / QLW-P1DMWA-1) (Polynucleobacter necessarius subsp. asymbioticus).